The primary structure comprises 117 residues: MDWTWRILFLVAAVTDAYSQMQLVQSGAEVKKTGSSVKVSCKASGYTFTYRYLHWVRQAPGQALEWMGWITPFNGNTNYAQKFQDRVTITRDRSMSTAYMELSSLRSEDTAMYYCAR.

The N-terminal stretch at 1-19 (MDWTWRILFLVAAVTDAYS) is a signal peptide. A framework-1 region spans residues 20-44 (QMQLVQSGAEVKKTGSSVKVSCKAS). The 98-residue stretch at 20 to 117 (QMQLVQSGAE…EDTAMYYCAR (98 aa)) folds into the Ig-like domain. C41 and C115 are oxidised to a cystine. The segment at 45-52 (GYTFTYRY) is complementarity-determining-1. Residues 53 to 69 (LHWVRQAPGQALEWMGW) are framework-2. The segment at 70-77 (ITPFNGNT) is complementarity-determining-2. The tract at residues 78-115 (NYAQKFQDRVTITRDRSMSTAYMELSSLRSEDTAMYYC) is framework-3. The complementarity-determining-3 stretch occupies residues 116 to 117 (AR).

In terms of assembly, immunoglobulins are composed of two identical heavy chains and two identical light chains; disulfide-linked.

It is found in the secreted. The protein localises to the cell membrane. In terms of biological role, v region of the variable domain of immunoglobulin heavy chains that participates in the antigen recognition. Immunoglobulins, also known as antibodies, are membrane-bound or secreted glycoproteins produced by B lymphocytes. In the recognition phase of humoral immunity, the membrane-bound immunoglobulins serve as receptors which, upon binding of a specific antigen, trigger the clonal expansion and differentiation of B lymphocytes into immunoglobulins-secreting plasma cells. Secreted immunoglobulins mediate the effector phase of humoral immunity, which results in the elimination of bound antigens. The antigen binding site is formed by the variable domain of one heavy chain, together with that of its associated light chain. Thus, each immunoglobulin has two antigen binding sites with remarkable affinity for a particular antigen. The variable domains are assembled by a process called V-(D)-J rearrangement and can then be subjected to somatic hypermutations which, after exposure to antigen and selection, allow affinity maturation for a particular antigen. The sequence is that of Immunoglobulin heavy variable 1-45 from Homo sapiens (Human).